Consider the following 628-residue polypeptide: Chaperone protein HtpG (628 aa).

The interval 1 to 340 is a; substrate-binding; that stretch reads MSTETLQKET…SADLPLNVSR (340 aa). Positions 341-557 are b; the sequence is EILQHSKDIE…EHDLSGNLER (217 aa). Residues 558–628 form a c region; it reads LLKAAGQKTP…FVRRVNAMLA (71 aa).

It belongs to the heat shock protein 90 family. Homodimer.

It is found in the cytoplasm. In terms of biological role, molecular chaperone. Has ATPase activity. The protein is Chaperone protein HtpG of Methylobacillus flagellatus (strain ATCC 51484 / DSM 6875 / VKM B-1610 / KT).